A 38-amino-acid chain; its full sequence is Large ribosomal subunit protein bL36 (38 aa).

Belongs to the bacterial ribosomal protein bL36 family.

This chain is Large ribosomal subunit protein bL36, found in Pseudoalteromonas atlantica (strain T6c / ATCC BAA-1087).